We begin with the raw amino-acid sequence, 235 residues long: MDMSLVFFSHLNMCESKEKTFFKLMHGSGKEETNIEAKIRAKEKRNRLSLLLQRPDFHGETHTSRSALLAKETRVSSEEALKWAESFDKLLSHRDGVDAFTRFLKTEFSEENIEFWVACEDFKKCTEPQQLILKAKSIYEKFIKNDAPKEVNLDFHTKEVITKSIAQPTLHSFDAAQSRVCQLMEHDSYKRFLKSEIYLHLIEGRPQRPTNLRRRSRSFTYNEFQDVKSDVAIWL.

At Ser-49 the chain carries Phosphoserine. The RGS domain occupies 86–202 (SFDKLLSHRD…LKSEIYLHLI (117 aa)). A phosphoserine mark is found at Ser-216 and Ser-218.

Its subcellular location is the cytoplasm. Its function is as follows. Inhibits signal transduction by increasing the GTPase activity of G protein alpha subunits thereby driving them into their inactive GDP-bound form. Binds to G(i) alpha-1, G(i) alpha-2, G(i) alpha-3 and G(q) alpha. This chain is Regulator of G-protein signaling 18 (Rgs18), found in Rattus norvegicus (Rat).